A 157-amino-acid chain; its full sequence is Probable Brix domain-containing ribosomal biogenesis protein (157 aa).

The 157-residue stretch at 1–157 folds into the Brix domain; that stretch reads MLVTTSRKPS…KFNIKGFKKY (157 aa).

Probably involved in the biogenesis of the ribosome. The sequence is that of Probable Brix domain-containing ribosomal biogenesis protein from Methanosarcina mazei (strain ATCC BAA-159 / DSM 3647 / Goe1 / Go1 / JCM 11833 / OCM 88) (Methanosarcina frisia).